The primary structure comprises 145 residues: Prefoldin subunit alpha (145 aa).

This sequence belongs to the prefoldin alpha subunit family. As to quaternary structure, heterohexamer of two alpha and four beta subunits.

It is found in the cytoplasm. Functionally, molecular chaperone capable of stabilizing a range of proteins. Seems to fulfill an ATP-independent, HSP70-like function in archaeal de novo protein folding. The sequence is that of Prefoldin subunit alpha from Nitrosopumilus maritimus (strain SCM1).